A 552-amino-acid polypeptide reads, in one-letter code: Chaperonin GroEL (552 aa).

ATP contacts are provided by residues 30 to 33 (TLGP), Lys-51, 87 to 91 (DGTTT), Gly-415, 479 to 481 (NAA), and Asp-495.

The protein belongs to the chaperonin (HSP60) family. Forms a cylinder of 14 subunits composed of two heptameric rings stacked back-to-back. Interacts with the co-chaperonin GroES.

The protein resides in the cytoplasm. The enzyme catalyses ATP + H2O + a folded polypeptide = ADP + phosphate + an unfolded polypeptide.. Its function is as follows. Together with its co-chaperonin GroES, plays an essential role in assisting protein folding. The GroEL-GroES system forms a nano-cage that allows encapsulation of the non-native substrate proteins and provides a physical environment optimized to promote and accelerate protein folding. This is Chaperonin GroEL from Nitrosospira multiformis (strain ATCC 25196 / NCIMB 11849 / C 71).